Reading from the N-terminus, the 118-residue chain is Large ribosomal subunit protein bL20 (118 aa).

This sequence belongs to the bacterial ribosomal protein bL20 family.

In terms of biological role, binds directly to 23S ribosomal RNA and is necessary for the in vitro assembly process of the 50S ribosomal subunit. It is not involved in the protein synthesizing functions of that subunit. The chain is Large ribosomal subunit protein bL20 from Ectopseudomonas mendocina (strain ymp) (Pseudomonas mendocina).